The following is a 446-amino-acid chain: ATP-dependent protease ATPase subunit HslU (446 aa).

Residues Ile-17, 59–64, Asp-255, Glu-320, and Arg-392 contribute to the ATP site; that span reads GVGKTE.

Belongs to the ClpX chaperone family. HslU subfamily. In terms of assembly, a double ring-shaped homohexamer of HslV is capped on each side by a ring-shaped HslU homohexamer. The assembly of the HslU/HslV complex is dependent on binding of ATP.

It localises to the cytoplasm. Its function is as follows. ATPase subunit of a proteasome-like degradation complex; this subunit has chaperone activity. The binding of ATP and its subsequent hydrolysis by HslU are essential for unfolding of protein substrates subsequently hydrolyzed by HslV. HslU recognizes the N-terminal part of its protein substrates and unfolds these before they are guided to HslV for hydrolysis. The protein is ATP-dependent protease ATPase subunit HslU of Pseudomonas fluorescens (strain ATCC BAA-477 / NRRL B-23932 / Pf-5).